We begin with the raw amino-acid sequence, 183 residues long: A-type ATP synthase subunit E (183 aa).

The protein belongs to the V-ATPase E subunit family. In terms of assembly, has multiple subunits with at least A(3), B(3), C, D, E, F, H, I and proteolipid K(x).

It is found in the cell membrane. Component of the A-type ATP synthase that produces ATP from ADP in the presence of a proton gradient across the membrane. This chain is A-type ATP synthase subunit E, found in Methanosarcina acetivorans (strain ATCC 35395 / DSM 2834 / JCM 12185 / C2A).